A 522-amino-acid polypeptide reads, in one-letter code: MRKHTDKPQLASKLVLRRVAIDTYRENVAYLHRDCAVYRAEGFQALSKVEVRANGRHILATLNVVDDPNIVACNELGLSEDAFAQMAVIDGQPASVSQAEPPQSIGALRRKLAGERLGREDFLGIVRDIAELHYSKIELSAFVVATNRDELDREEVYFLTEAMVASGRTLNWHEPLVVDKHCIGGIPGNRSSMLVVPIVAAHGLLCPKTSSRAITSPAGTADTMEVLAKVELPVDQLADIVRTHRGCLAWGGAAHLSPADDVLISVERPLAIDSPGQMVASILSKKIAAGSTHLVLDIPIGPSAKVRSMPEAQRLRRLFEYVAGRMHLSLDVVVTDGRQPIGNGIGPVLEARDVMRVLENDPRAPNDLRQKSLRLAGRLIEFDPDVRGGDGFAIARDILDSGRALAKMNAIIAAQGAKPFDHNHPQLGALTFDICASESGVVTGIDNLQVARIARLAGAPKVIGAGIDLFHKLGEAVTSGEVLYRVHAGFQSDLDFARQACAKSTGYTLGRAEDVPHVFTEF.

The protein belongs to the thymidine/pyrimidine-nucleoside phosphorylase family. Type 2 subfamily.

It carries out the reaction thymidine + phosphate = 2-deoxy-alpha-D-ribose 1-phosphate + thymine. This Albidiferax ferrireducens (strain ATCC BAA-621 / DSM 15236 / T118) (Rhodoferax ferrireducens) protein is Putative thymidine phosphorylase.